We begin with the raw amino-acid sequence, 1319 residues long: Uromodulin-like 1 (1319 aa).

The N-terminal stretch at 1 to 22 is a signal peptide; it reads MMSRTVRLVLLALACTVDLSQA. Residues 23–1273 lie on the Extracellular side of the membrane; it reads SGFTENGLSL…CTKPVLGTGY (1251 aa). In terms of domain architecture, EMI spans 34-107; that stretch reads SYQLCSYPVT…FEQLGLYCVL (74 aa). 3 disulfide bridges follow: Cys38-Cys95, Cys62-Cys71, and Cys94-Cys105. A glycan (N-linked (GlcNAc...) asparagine) is linked at Asn90. Asn110 is a glycosylation site (N-linked (GlcNAc...) asparagine). Positions 115–159 constitute a WAP domain; that stretch reads FASRPGVCPTAEAEPLSPSCSLDTDCSGLQKCCSWPGGRHCVSPT. Residues Asn172, Asn193, and Asn243 are each glycosylated (N-linked (GlcNAc...) asparagine). The EGF-like 1; calcium-binding domain maps to 265–306; that stretch reads DVNECLHSELQACSVREQCRNLEGSYQCVSSQRLNHTDEDCP. Intrachain disulfides connect Cys269/Cys283 and Cys277/Cys292. Residues 307–391 form the Fibronectin type-III 1 domain; it reads PIRDFVALNV…ATLVVKTDAQ (85 aa). Asn315 carries an N-linked (GlcNAc...) asparagine glycan. The SEA 1 domain maps to 389–503; the sequence is DAQVFQVTIR…QRTFVQDWDE (115 aa). The 46-residue stretch at 500–545 folds into the EGF-like 2; calcium-binding domain; the sequence is DWDECAHSSEHDCHPSARCINLEGSYTCQCLTARDASPSRAGRVCE. Intrachain disulfides connect Cys504/Cys518, Cys512/Cys527, and Cys529/Cys544. Disordered regions lie at residues 569–649 and 664–703; these read TGIT…ITKD and HSSP…PESP. Over residues 619 to 632 the composition is skewed to low complexity; that stretch reads TGQGQTHGTHQGTT. The span at 638–647 shows a compositional bias: basic and acidic residues; the sequence is TTRESQELIT. Residues 664–678 show a composition bias toward polar residues; sequence HSSPTWKTPPNSTRL. The Fibronectin type-III 2 domain maps to 709 to 795; the sequence is PIGKVTVSNV…QLKVRTVAQK (87 aa). N-linked (GlcNAc...) asparagine glycosylation is found at Asn717 and Asn757. The SEA 2 domain maps to 792–904; sequence VAQKLAGNVR…GKTFMQDYNE (113 aa). The region spanning 901 to 945 is the EGF-like 3; calcium-binding domain; the sequence is DYNECDMKEDDCAPGTCRNTFGSFTCSCDEGGPDSQVEYSGRSCD. 3 cysteine pairs are disulfide-bonded: Cys905-Cys917, Cys912-Cys926, and Cys928-Cys944. The interval 939–966 is disordered; sequence YSGRSCDGDPSGNMTQTPGSEWSPTPAG. Positions 950–961 are enriched in polar residues; that stretch reads GNMTQTPGSEWS. Asn951 is a glycosylation site (N-linked (GlcNAc...) asparagine). Positions 995–1238 constitute a ZP domain; it reads SCEIETVIIT…NSCRISCNDF (244 aa). Cys1160 and Cys1218 are disulfide-bonded. Residues 1274 to 1294 traverse the membrane as a helical segment; it reads IILLAAAALLVVAGATTLLIL. Residues 1295–1319 are Cytoplasmic-facing; that stretch reads RYQRVRQKYNLRIQTDDFSYQVFSQ.

The protein localises to the cell membrane. The chain is Uromodulin-like 1 (Umodl1) from Mus musculus (Mouse).